Consider the following 685-residue polypeptide: Sodium-dependent phosphate transporter 1-A (685 aa).

6 consecutive transmembrane segments (helical) span residues 21–41 (IMAP…VLAF), 66–86 (ACIL…AKVS), 106–126 (LMAG…AASF), 162–182 (IVLS…LLFL), 207–227 (ACTI…LLGF), and 234–254 (GIIL…WFVV). Disordered regions lie at residues 438 to 458 (RNRD…HGAD) and 483 to 513 (EAEE…HDQD). Over residues 483-496 (EAEEQEEGSVEDVE) the composition is skewed to acidic residues. A compositionally biased stretch (basic and acidic residues) spans 497–513 (TDRKSSSSSLEERHDQD). Transmembrane regions (helical) follow at residues 517–537 (VSLL…FAHG), 565–585 (ATPI…LWVW), 606–626 (FSIE…GLPI), and 656–676 (IFLA…GIMA).

This sequence belongs to the inorganic phosphate transporter (PiT) (TC 2.A.20) family.

The protein localises to the membrane. In terms of biological role, sodium-phosphate symporter which plays a fundamental housekeeping role in phosphate transport. The polypeptide is Sodium-dependent phosphate transporter 1-A (slc20a1-a) (Xenopus laevis (African clawed frog)).